Reading from the N-terminus, the 97-residue chain is RNA-binding protein Hfq (97 aa).

In terms of domain architecture, Sm spans 10-70 (DPFLNALRKE…ISTIVPARSV (61 aa)). Residues 74–97 (HENRPQAAPTSTLVQVETVQQPAE) are disordered. Residues 81-97 (APTSTLVQVETVQQPAE) are compositionally biased toward polar residues.

This sequence belongs to the Hfq family. Homohexamer.

Functionally, RNA chaperone that binds small regulatory RNA (sRNAs) and mRNAs to facilitate mRNA translational regulation in response to envelope stress, environmental stress and changes in metabolite concentrations. Also binds with high specificity to tRNAs. The polypeptide is RNA-binding protein Hfq (Neisseria meningitidis serogroup A / serotype 4A (strain DSM 15465 / Z2491)).